The sequence spans 183 residues: Nucleosome assembly protein 1-like 5 (183 aa).

Positions M1–E71 are disordered. 2 stretches are compositionally biased toward low complexity: residues Q7–A21 and A28–G49. Residues V81–K107 are a coiled coil. The span at E135 to A161 shows a compositional bias: acidic residues. A disordered region spans residues E135–K183. Positions A168–K183 are enriched in basic and acidic residues.

Belongs to the nucleosome assembly protein (NAP) family.

Its subcellular location is the nucleus. This chain is Nucleosome assembly protein 1-like 5 (NAP1L5), found in Pongo abelii (Sumatran orangutan).